A 407-amino-acid chain; its full sequence is MEAPPGPEPMELDAPPPPAAVAAAAATAGISEKVLQKKEEGGGDAVTGHIISTTIGGKNGEPKRTISYMAERVVGTGSFGIVFQAKCLETGETVAIKKVLQDRRYKNRELQLMRAMEHPNVICLKHCFFSTTSRDELFLNLVMEYVPETLYRVLKHYSNANQRMPLIYVKLYIYQLFRGLAYIHTVPGVCHRDVKPQNVLVDPLTHQVKLCDFGSAKVLVPGEPNISYICSRYYRAPELIFGATEYTTSIDIWSAGCVLAELLLGQPLFPGESAVDQLVEIIKVLGTPTREEIRCMNPNYTEFKFPQIKAHPWHKIFHKRMPPEAIDLASRLLQYSPSLRCTALDACAHSFFDELREPNARLPNGRPFPPLFNFKHELASASPELIHRLIPDHIRRQHGLNFAHAGS.

Residues 1–19 are compositionally biased toward pro residues; it reads MEAPPGPEPMELDAPPPPA. The tract at residues 1–21 is disordered; sequence MEAPPGPEPMELDAPPPPAAV. Residues 68 to 352 form the Protein kinase domain; that stretch reads YMAERVVGTG…ALDACAHSFF (285 aa). Residues 74–82 and Lys-97 each bind ATP; that span reads VGTGSFGIV. Asp-193 acts as the Proton acceptor in catalysis.

The protein belongs to the protein kinase superfamily. CMGC Ser/Thr protein kinase family. GSK-3 subfamily. Interacts with LIC. In terms of tissue distribution, highly expressed in the entire young panicles, spikelets, awns, vascular bundles of palea and lemma, stigma and rachilla. Expressed in root tips, root hairs, lamina joint in the collar region, vascular bundles of coleoptiles.

It carries out the reaction L-seryl-[protein] + ATP = O-phospho-L-seryl-[protein] + ADP + H(+). The enzyme catalyses L-threonyl-[protein] + ATP = O-phospho-L-threonyl-[protein] + ADP + H(+). In terms of biological role, probable serine-threonine kinase that may act as a negative regulator of brassinosteroid (BR) signaling during flower development. May have physiological roles in stress signal-transduction pathways. Phosphorylates LIC in response to BR perception. The protein is Shaggy-related protein kinase GSK1 of Oryza sativa subsp. japonica (Rice).